The sequence spans 148 residues: Large ribosomal subunit protein uL22 (148 aa).

It belongs to the universal ribosomal protein uL22 family. Part of the 50S ribosomal subunit.

Its function is as follows. This protein binds specifically to 23S rRNA; its binding is stimulated by other ribosomal proteins, e.g. L4, L17, and L20. It is important during the early stages of 50S assembly. It makes multiple contacts with different domains of the 23S rRNA in the assembled 50S subunit and ribosome. In terms of biological role, the globular domain of the protein is located near the polypeptide exit tunnel on the outside of the subunit, while an extended beta-hairpin is found that lines the wall of the exit tunnel in the center of the 70S ribosome. This Thermosipho africanus (strain TCF52B) protein is Large ribosomal subunit protein uL22.